We begin with the raw amino-acid sequence, 983 residues long: MRRFEFELARMSGAAFCVVTGYRLLTSKWLADRVEDYRQRVIADRKQILRDAAVIRTSIQKQMELVRISVRKGHSHQEAATERNSATDTMIGVVEKCGYEPYIISPSPREKEYHGSRQFYSLADFRQDYRRDEITDRHVIVMTDVDYYVDMHELVGLGVPILLYTFQPSTVSGEVKDGYFTITDDHVHYRVAGGKDVRHRIWNYNQDTMFVRSKPRGFWASLKQILRDITGITALCGYLYLKLGIAPFGDQVTLFTVDQFKMGEHRNIVSIVPFATCRSNLLKISEYGAELDYMRYQQRNNNANFNAVTYISQEGPLISLGLEGNFASVQLPLQDFENIRTAYELSKNNNLSDTVRRSARSCKEAAIIHKCLQAGCDLASEVVHKPGELARHYQALGDTYDIDPSEQGKCYAREYAPGPLTQTAVFPSESRSNELATIDGRIAGPQAKAKSREHITPKMHKVARDFVRHLVPTAGLGRPYPLTYVEEHQTKPLQRARNDANRYHDEFTMIVKAFQKKEAYNAPNYPRNISTVPHTQNVKLSSYTYAFKEAVLQHVPWYMPTHTPAEIAEAVQSLAASSTELVETDYSKFDGTFLRFMRENVEFAIYKRWVHLDHLTELSTLLGNELQAPAVTRLGIKYDPDCSRLSGSALTTDGNSIANAFVSYLAGRQAGMDDDEAWTWIGIVYGDDGLRSGNVSDALLSKTASSLGFDLKIVNRAPRGSPVTFLSRVYLDPWSSPASVQSPLRTLLKLHTTCDTQSDIEDVGWAKTQAYLVTDCLTPFIGHWCRAYQRNCTARVVQYADYNDIPFWVKNEDHVGNSWPQSDSVDWNDVVANELGLTTAELLKHLAALDAYTGPVSGLPRLTTSLDLEPKMPVALDGEVQAGPSQQPQTDKDGTSPTGDRSAPRRARTALQDADGRACRSRRSDRSPGKRDANVRDKRQRRSTTPPRSRPSVPGPSSSGRRTDGDRVRGGAARQRQRRRSPV.

A RdRp catalytic domain is found at 579 to 701 (TELVETDYSK…SGNVSDALLS (123 aa)). The segment at 879–983 (EVQAGPSQQP…RQRQRRRSPV (105 aa)) is disordered. The segment covering 883–899 (GPSQQPQTDKDGTSPTG) has biased composition (polar residues). A compositionally biased stretch (basic and acidic residues) spans 914-937 (ADGRACRSRRSDRSPGKRDANVRD). Positions 943-960 (STTPPRSRPSVPGPSSSG) are enriched in low complexity.

The protein belongs to the nodaviridae RNA polymerase family.

It catalyses the reaction RNA(n) + a ribonucleoside 5'-triphosphate = RNA(n+1) + diphosphate. Its function is as follows. RNA-dependent RNA polymerase which replicates the viral genome composed of 2 RNA segments, RNA1 and RNA2. The chain is RNA-directed RNA polymerase from Dicentrarchus labrax (European seabass).